A 510-amino-acid polypeptide reads, in one-letter code: Histidine ammonia-lyase (510 aa).

Positions Ala-143–Gly-145 form a cross-link, 5-imidazolinone (Ala-Gly). At Ser-144 the chain carries 2,3-didehydroalanine (Ser).

It belongs to the PAL/histidase family. Post-translationally, contains an active site 4-methylidene-imidazol-5-one (MIO), which is formed autocatalytically by cyclization and dehydration of residues Ala-Ser-Gly.

Its subcellular location is the cytoplasm. It carries out the reaction L-histidine = trans-urocanate + NH4(+). The protein operates within amino-acid degradation; L-histidine degradation into L-glutamate; N-formimidoyl-L-glutamate from L-histidine: step 1/3. The chain is Histidine ammonia-lyase from Psychromonas ingrahamii (strain DSM 17664 / CCUG 51855 / 37).